The primary structure comprises 347 residues: Isopentenyl-diphosphate delta-isomerase (347 aa).

Arginine 5–lysine 6 provides a ligand contact to substrate. FMN-binding positions include serine 61, serine 62–threonine 64, serine 92, and asparagine 120. Residue serine 92–arginine 94 participates in substrate binding. Glutamine 159 contacts substrate. Glutamate 160 contributes to the Mg(2+) binding site. Residues lysine 189, serine 214, threonine 219, glycine 269–arginine 271, and alanine 290–arginine 291 each bind FMN.

It belongs to the IPP isomerase type 2 family. In terms of assembly, homooctamer. Dimer of tetramers. FMN is required as a cofactor. Requires NADPH as cofactor. Mg(2+) serves as cofactor.

It localises to the cytoplasm. The enzyme catalyses isopentenyl diphosphate = dimethylallyl diphosphate. Involved in the biosynthesis of isoprenoids. Catalyzes the 1,3-allylic rearrangement of the homoallylic substrate isopentenyl (IPP) to its allylic isomer, dimethylallyl diphosphate (DMAPP). This chain is Isopentenyl-diphosphate delta-isomerase, found in Thermoplasma volcanium (strain ATCC 51530 / DSM 4299 / JCM 9571 / NBRC 15438 / GSS1).